A 147-amino-acid polypeptide reads, in one-letter code: MRADFFLSDNRAALLKRGLTIILSFLVFTSIFLLPSPSLAEDVKGADDPIVVAGNIKVKPDKKEEFIALSQTFIEPSRSEPGCISYSFYEDETEDNSFLFFEVWRNRAALDYHFQTPYFHEFVEKSPDLLAKPAEIKIYKIAETQTL.

Residues 50–138 (IVVAGNIKVK…LLAKPAEIKI (89 aa)) form the ABM domain.

Belongs to the LsrG family.

This is an uncharacterized protein from Synechocystis sp. (strain ATCC 27184 / PCC 6803 / Kazusa).